Here is an 876-residue protein sequence, read N- to C-terminus: Valine--tRNA ligase (876 aa).

The 'HIGH' region motif lies at 44-54; it reads PNVTGKLHLGH. Positions 520–524 match the 'KMSKS' region motif; the sequence is KMSKS. Lysine 523 serves as a coordination point for ATP. The stretch at 805–876 forms a coiled coil; that stretch reads LEGLIDMDKE…VKNRIEQLKA (72 aa).

It belongs to the class-I aminoacyl-tRNA synthetase family. ValS type 1 subfamily. Monomer.

The protein resides in the cytoplasm. The enzyme catalyses tRNA(Val) + L-valine + ATP = L-valyl-tRNA(Val) + AMP + diphosphate. Functionally, catalyzes the attachment of valine to tRNA(Val). As ValRS can inadvertently accommodate and process structurally similar amino acids such as threonine, to avoid such errors, it has a 'posttransfer' editing activity that hydrolyzes mischarged Thr-tRNA(Val) in a tRNA-dependent manner. The sequence is that of Valine--tRNA ligase from Staphylococcus haemolyticus (strain JCSC1435).